The following is a 754-amino-acid chain: 5-methyltetrahydropteroyltriglutamate--homocysteine methyltransferase (754 aa).

5-methyltetrahydropteroyltri-L-glutamate contacts are provided by residues 19–22 and lysine 121; that span reads RELK. L-homocysteine-binding positions include 423–425 and glutamate 476; that span reads IGS. Residues 423–425 and glutamate 476 each bind L-methionine; that span reads IGS. Residues 507-508 and tryptophan 553 each bind 5-methyltetrahydropteroyltri-L-glutamate; that span reads RC. Position 591 (aspartate 591) interacts with L-homocysteine. Residue aspartate 591 participates in L-methionine binding. Glutamate 597 contributes to the 5-methyltetrahydropteroyltri-L-glutamate binding site. Zn(2+) contacts are provided by histidine 633, cysteine 635, and glutamate 657. Histidine 686 acts as the Proton donor in catalysis. Zn(2+) is bound at residue cysteine 718.

It belongs to the vitamin-B12 independent methionine synthase family. Requires Zn(2+) as cofactor.

It carries out the reaction 5-methyltetrahydropteroyltri-L-glutamate + L-homocysteine = tetrahydropteroyltri-L-glutamate + L-methionine. The protein operates within amino-acid biosynthesis; L-methionine biosynthesis via de novo pathway; L-methionine from L-homocysteine (MetE route): step 1/1. Catalyzes the transfer of a methyl group from 5-methyltetrahydrofolate to homocysteine resulting in methionine formation. The chain is 5-methyltetrahydropteroyltriglutamate--homocysteine methyltransferase from Corynebacterium efficiens (strain DSM 44549 / YS-314 / AJ 12310 / JCM 11189 / NBRC 100395).